A 624-amino-acid polypeptide reads, in one-letter code: Probable potassium transport system protein Kup (624 aa).

12 consecutive transmembrane segments (helical) span residues 13 to 33, 52 to 72, 102 to 122, 139 to 159, 170 to 190, 208 to 228, 249 to 269, 291 to 311, 339 to 359, 368 to 388, 399 to 419, and 421 to 441; these read LALG…LYTM, ILSL…VLVI, WIIM…SLIT, PALH…LFAI, LFGP…AIGI, FFMT…LAIT, WFGF…ALLL, MVAL…SGAF, IYIP…VLGF, AYGI…ALLM, TLVA…ANAV, and IPEG…ILVT.

This sequence belongs to the HAK/KUP transporter (TC 2.A.72) family.

The protein localises to the cell inner membrane. The catalysed reaction is K(+)(in) + H(+)(in) = K(+)(out) + H(+)(out). In terms of biological role, transport of potassium into the cell. Likely operates as a K(+):H(+) symporter. The sequence is that of Probable potassium transport system protein Kup from Thiobacillus denitrificans (strain ATCC 25259 / T1).